We begin with the raw amino-acid sequence, 170 residues long: Ureidoglycolate lyase (170 aa).

It belongs to the ureidoglycolate lyase family. In terms of assembly, homodimer. It depends on Ni(2+) as a cofactor.

It catalyses the reaction (S)-ureidoglycolate = urea + glyoxylate. It functions in the pathway nitrogen metabolism; (S)-allantoin degradation. Catalyzes the catabolism of the allantoin degradation intermediate (S)-ureidoglycolate, generating urea and glyoxylate. Involved in the utilization of allantoin as nitrogen source. The protein is Ureidoglycolate lyase of Pseudomonas syringae pv. tomato (strain ATCC BAA-871 / DC3000).